Reading from the N-terminus, the 144-residue chain is DYVCGPLQRLKVKRQWAEAYGSGNSREEFGHFIWSHVFQHSPAARDMFKRVRGDNIHTPAFRAHATRVLGGLDMCIALLDDEPVLNTQLAHLAKQHETRGVEAAHYDTVNHAVMMGVENVIGSEVFDQDAWKPCLNVITNGIQG.

A Globin domain is found at 3 to 144; the sequence is VCGPLQRLKV…LNVITNGIQG (142 aa). His-96 contributes to the heme b binding site.

It belongs to the globin family. As to quaternary structure, part of giant hemoglobin C1, V1 and V2. This worm has three different extracellular Hbs: two dissolved in the vascular blood, V1 (CA. 3,500 kDa) and V2 (CA. 400 kDa), and one in the coelomic fluid, C1 (CA. 400 kDa). V1 consists of four heme-containing, globin chains (B-E) and four linker chains (L1-L4). V2 consists of six globin chains (A-F) and C1 consists of five globin chains (A-E).

The protein localises to the secreted. Its subcellular location is the extracellular space. The polypeptide is Giant hemoglobins B chain (Riftia pachyptila (Vent tube worm)).